The chain runs to 312 residues: Olfactory receptor 1D2 (312 aa).

Over 1 to 25 the chain is Extracellular; that stretch reads MDGGNQSEGSEFLLLGMSESPEQQR. Asparagine 5 carries an N-linked (GlcNAc...) asparagine glycan. The helical transmembrane segment at 26 to 49 threads the bilayer; it reads ILFWMFLSMYLVTVVGNVLIILAI. At 50 to 57 the chain is on the cytoplasmic side; that stretch reads SSDSRLHT. A helical membrane pass occupies residues 58–79; that stretch reads PVYFFLANLSFTDLFFVTNTIP. The Extracellular segment spans residues 80–100; that stretch reads KMLVNLQSHNKAISYAGCLTQ. A disulfide bridge connects residues cysteine 97 and cysteine 189. The chain crosses the membrane as a helical span at residues 101–120; that stretch reads LYFLVSLVALDNLILAVMAY. The Cytoplasmic portion of the chain corresponds to 121–139; sequence DRYVAICCPLHYTTAMSPK. Residues 140-158 form a helical membrane-spanning segment; it reads LCILLLSLCWVLSVLYGLI. Over 159–196 the chain is Extracellular; it reads HTLLMTRVTFCGSRKIHYIFCEMYVLLRMACSNIQINH. N-linked (GlcNAc...) asparagine glycosylation occurs at asparagine 195. Residues 197-219 traverse the membrane as a helical segment; that stretch reads TVLIATGCFIFLIPFGFVIISYV. Residues 220–236 lie on the Cytoplasmic side of the membrane; it reads LIIRAILRIPSVSKKYK. A helical transmembrane segment spans residues 237-259; sequence AFSTCASHLGAVSLFYGTLCMVY. Residues 260 to 271 lie on the Extracellular side of the membrane; that stretch reads LKPLHTYSVKDS. Residues 272-291 form a helical membrane-spanning segment; it reads VATVMYAVVTPMMNPFIYSL. At 292–312 the chain is on the cytoplasmic side; that stretch reads RNKDMHGALGRLLDKHFKRLT.

This sequence belongs to the G-protein coupled receptor 1 family. As to expression, expressed in testis. Expressed in spermatozoa (at protein level). Expressed in olfactory epithelium.

It localises to the cell membrane. Functionally, odorant receptor which may be involved in sperm chemotaxis. Bourgeonal is a strong chemoattractant for sperm in vitro and is shown to be a strong agonist for OR1D2 in vitro. May also function in olfactory reception. In Homo sapiens (Human), this protein is Olfactory receptor 1D2 (OR1D2).